Consider the following 484-residue polypeptide: Glycogen synthase (484 aa).

Lys21 contributes to the ADP-alpha-D-glucose binding site.

Belongs to the glycosyltransferase 1 family. Bacterial/plant glycogen synthase subfamily.

The enzyme catalyses [(1-&gt;4)-alpha-D-glucosyl](n) + ADP-alpha-D-glucose = [(1-&gt;4)-alpha-D-glucosyl](n+1) + ADP + H(+). It participates in glycan biosynthesis; glycogen biosynthesis. Its function is as follows. Synthesizes alpha-1,4-glucan chains using ADP-glucose. This is Glycogen synthase from Pseudomonas syringae pv. tomato (strain ATCC BAA-871 / DC3000).